We begin with the raw amino-acid sequence, 246 residues long: Adenosylcobinamide-GDP ribazoletransferase (246 aa).

Transmembrane regions (helical) follow at residues valine 30 to alanine 50, glycine 51 to valine 71, valine 105 to alanine 125, glycine 131 to isoleucine 151, isoleucine 167 to tyrosine 189, leucine 193 to serine 210, and glycine 226 to leucine 246.

It belongs to the CobS family. Mg(2+) serves as cofactor.

The protein localises to the cell membrane. The enzyme catalyses alpha-ribazole + adenosylcob(III)inamide-GDP = adenosylcob(III)alamin + GMP + H(+). The catalysed reaction is alpha-ribazole 5'-phosphate + adenosylcob(III)inamide-GDP = adenosylcob(III)alamin 5'-phosphate + GMP + H(+). It participates in cofactor biosynthesis; adenosylcobalamin biosynthesis; adenosylcobalamin from cob(II)yrinate a,c-diamide: step 7/7. Functionally, joins adenosylcobinamide-GDP and alpha-ribazole to generate adenosylcobalamin (Ado-cobalamin). Also synthesizes adenosylcobalamin 5'-phosphate from adenosylcobinamide-GDP and alpha-ribazole 5'-phosphate. This Brevibacillus brevis (strain 47 / JCM 6285 / NBRC 100599) protein is Adenosylcobinamide-GDP ribazoletransferase.